The primary structure comprises 273 residues: Phosphate import ATP-binding protein PstB (273 aa).

The ABC transporter domain occupies 27-268 (VTVRNLNFYY…PSDRRTQDYI (242 aa)). 59 to 66 (GPSGCGKS) contacts ATP.

The protein belongs to the ABC transporter superfamily. Phosphate importer (TC 3.A.1.7) family. As to quaternary structure, the complex is composed of two ATP-binding proteins (PstB), two transmembrane proteins (PstC and PstA) and a solute-binding protein (PstS).

It localises to the cell inner membrane. It carries out the reaction phosphate(out) + ATP + H2O = ADP + 2 phosphate(in) + H(+). Part of the ABC transporter complex PstSACB involved in phosphate import. Responsible for energy coupling to the transport system. The protein is Phosphate import ATP-binding protein PstB of Bradyrhizobium diazoefficiens (strain JCM 10833 / BCRC 13528 / IAM 13628 / NBRC 14792 / USDA 110).